The chain runs to 237 residues: Orotidine 5'-phosphate decarboxylase (237 aa).

Residues Asp-10, Lys-32, 59–68, Thr-118, Arg-180, Gln-189, Gly-209, and Arg-210 contribute to the substrate site; that span reads DLKLHDIPNT. Lys-61 functions as the Proton donor in the catalytic mechanism.

The protein belongs to the OMP decarboxylase family. Type 1 subfamily. As to quaternary structure, homodimer.

The enzyme catalyses orotidine 5'-phosphate + H(+) = UMP + CO2. It participates in pyrimidine metabolism; UMP biosynthesis via de novo pathway; UMP from orotate: step 2/2. Functionally, catalyzes the decarboxylation of orotidine 5'-monophosphate (OMP) to uridine 5'-monophosphate (UMP). The sequence is that of Orotidine 5'-phosphate decarboxylase from Fusobacterium nucleatum subsp. nucleatum (strain ATCC 25586 / DSM 15643 / BCRC 10681 / CIP 101130 / JCM 8532 / KCTC 2640 / LMG 13131 / VPI 4355).